A 469-amino-acid chain; its full sequence is uncharacterized protein (469 aa).

Transmembrane regions (helical) follow at residues 42–62 (DVII…AYVI), 179–199 (IVLP…VTPS), and 249–269 (NLKY…GLFV).

The protein localises to the cell membrane. This is an uncharacterized protein from Methanocaldococcus jannaschii (strain ATCC 43067 / DSM 2661 / JAL-1 / JCM 10045 / NBRC 100440) (Methanococcus jannaschii).